The sequence spans 304 residues: Acetyl-coenzyme A carboxylase carboxyl transferase subunit beta (304 aa).

A CoA carboxyltransferase N-terminal domain is found at 23 to 292 (VWTKCDSCGQ…PNPEAPREGV (270 aa)). The Zn(2+) site is built by Cys27, Cys30, Cys46, and Cys49. The segment at 27–49 (CDSCGQVLYRAELERNLEVCPKC) adopts a C4-type zinc-finger fold. A disordered region spans residues 285–304 (PEAPREGVVVPPVPDQEPEA). Pro residues predominate over residues 295-304 (PPVPDQEPEA).

The protein belongs to the AccD/PCCB family. As to quaternary structure, acetyl-CoA carboxylase is a heterohexamer composed of biotin carboxyl carrier protein (AccB), biotin carboxylase (AccC) and two subunits each of ACCase subunit alpha (AccA) and ACCase subunit beta (AccD). Requires Zn(2+) as cofactor.

Its subcellular location is the cytoplasm. It catalyses the reaction N(6)-carboxybiotinyl-L-lysyl-[protein] + acetyl-CoA = N(6)-biotinyl-L-lysyl-[protein] + malonyl-CoA. Its pathway is lipid metabolism; malonyl-CoA biosynthesis; malonyl-CoA from acetyl-CoA: step 1/1. Functionally, component of the acetyl coenzyme A carboxylase (ACC) complex. Biotin carboxylase (BC) catalyzes the carboxylation of biotin on its carrier protein (BCCP) and then the CO(2) group is transferred by the transcarboxylase to acetyl-CoA to form malonyl-CoA. The polypeptide is Acetyl-coenzyme A carboxylase carboxyl transferase subunit beta (Escherichia coli O6:H1 (strain CFT073 / ATCC 700928 / UPEC)).